Consider the following 296-residue polypeptide: ATP phosphoribosyltransferase (296 aa).

The protein belongs to the ATP phosphoribosyltransferase family. Long subfamily. Mg(2+) serves as cofactor.

Its subcellular location is the cytoplasm. The enzyme catalyses 1-(5-phospho-beta-D-ribosyl)-ATP + diphosphate = 5-phospho-alpha-D-ribose 1-diphosphate + ATP. It participates in amino-acid biosynthesis; L-histidine biosynthesis; L-histidine from 5-phospho-alpha-D-ribose 1-diphosphate: step 1/9. With respect to regulation, feedback inhibited by histidine. Catalyzes the condensation of ATP and 5-phosphoribose 1-diphosphate to form N'-(5'-phosphoribosyl)-ATP (PR-ATP). Has a crucial role in the pathway because the rate of histidine biosynthesis seems to be controlled primarily by regulation of HisG enzymatic activity. This Halorubrum lacusprofundi (strain ATCC 49239 / DSM 5036 / JCM 8891 / ACAM 34) protein is ATP phosphoribosyltransferase.